We begin with the raw amino-acid sequence, 209 residues long: Urease accessory protein UreG (209 aa).

14-21 (GPVGSGKT) contributes to the GTP binding site.

This sequence belongs to the SIMIBI class G3E GTPase family. UreG subfamily. Homodimer. UreD, UreF and UreG form a complex that acts as a GTP-hydrolysis-dependent molecular chaperone, activating the urease apoprotein by helping to assemble the nickel containing metallocenter of UreC. The UreE protein probably delivers the nickel.

Its subcellular location is the cytoplasm. Its function is as follows. Facilitates the functional incorporation of the urease nickel metallocenter. This process requires GTP hydrolysis, probably effectuated by UreG. The polypeptide is Urease accessory protein UreG (Rhodopseudomonas palustris (strain ATCC BAA-98 / CGA009)).